Reading from the N-terminus, the 41-residue chain is Fibrinogen beta chain (41 aa).

Residues 1–41 (ADDYDDEVLPDARGHRPIDRKREELPSLRPAPPPISGGGYR) form a disordered region. Position 4 is a sulfotyrosine (Tyr4). The span at 10 to 26 (PDARGHRPIDRKREELP) shows a compositional bias: basic and acidic residues. The tract at residues 14–16 (GHR) is beta-chain polymerization, binding distal domain of another fibrin.

As to quaternary structure, heterohexamer; disulfide linked. Contains 2 sets of 3 non-identical chains (alpha, beta and gamma). The 2 heterotrimers are in head to head conformation with the N-termini in a small central domain. Post-translationally, conversion of fibrinogen to fibrin is triggered by thrombin, which cleaves fibrinopeptides A and B from alpha and beta chains, and thus exposes the N-terminal polymerization sites responsible for the formation of the soft clot.

It is found in the secreted. Functionally, cleaved by the protease thrombin to yield monomers which, together with fibrinogen alpha (FGA) and fibrinogen gamma (FGG), polymerize to form an insoluble fibrin matrix. Fibrin has a major function in hemostasis as one of the primary components of blood clots. In addition, functions during the early stages of wound repair to stabilize the lesion and guide cell migration during re-epithelialization. Was originally thought to be essential for platelet aggregation, based on in vitro studies using anticoagulated blood. However subsequent studies have shown that it is not absolutely required for thrombus formation in vivo. Enhances expression of SELP in activated platelets. Maternal fibrinogen is essential for successful pregnancy. Fibrin deposition is also associated with infection, where it protects against IFNG-mediated hemorrhage. May also facilitate the antibacterial immune response via both innate and T-cell mediated pathways. The protein is Fibrinogen beta chain (FGB) of Oryctolagus cuniculus (Rabbit).